The sequence spans 881 residues: Serine/threonine-protein kinase/endoribonuclease IRE1b (881 aa).

An N-terminal signal peptide occupies residues Met-1–Ser-21. Topologically, residues Phe-22 to Ser-357 are lumenal. N-linked (GlcNAc...) asparagine glycosylation occurs at Asn-115. Residues Gly-358 to Phe-378 form a helical membrane-spanning segment. Residues Tyr-379 to Phe-881 are Cytoplasmic-facing. One can recognise a Protein kinase domain in the interval Phe-459 to Phe-744. ATP contacts are provided by residues Ile-465 to Val-473 and Lys-487. The interval Gly-481 to Leu-502 is ATP selon article. Residue Asp-608 is the Proton acceptor of the active site. A disordered region spans residues Leu-642 to Gln-661. In terms of domain architecture, KEN spans Ser-747–Thr-878.

The protein belongs to the protein kinase superfamily. Ser/Thr protein kinase family. In terms of assembly, homodimer; disulfide-linked. Dimer formation is driven by hydrophobic interactions within the N-terminal luminal domains and stabilized by disulfide bridges. Requires Mg(2+) as cofactor. Autophosphorylated. In terms of tissue distribution, ubiquitous. Detected in the apical meristem, at leaf margins where vascular bundles end, in the anthers before pollen is formed and in the ovules at a very early stage of development. There is no expression in more mature embryos. Also strongly expressed in the cotyledons immediately after germination but not later on.

The protein resides in the endoplasmic reticulum membrane. The enzyme catalyses L-seryl-[protein] + ATP = O-phospho-L-seryl-[protein] + ADP + H(+). The catalysed reaction is L-threonyl-[protein] + ATP = O-phospho-L-threonyl-[protein] + ADP + H(+). Its activity is regulated as follows. The kinase domain is activated by trans-autophosphorylation. Kinase activity is required for activation of the endoribonuclease domain. In terms of biological role, senses unfolded proteins in the lumen of the endoplasmic reticulum via its N-terminal domain which leads to enzyme auto-activation. The active endoribonuclease domain splices bZIP60 mRNA to generate a new C-terminus, converting it into a potent unfolded-protein response transcriptional activator which then induces transcription of UPR target genes. Involved in organ growth regulation. Plays a role in plant immunity and abiotic stress responses. Required for ER stress-induced autophagy. The polypeptide is Serine/threonine-protein kinase/endoribonuclease IRE1b (IRE1B) (Arabidopsis thaliana (Mouse-ear cress)).